The sequence spans 234 residues: Preprocaerulein type-4 (234 aa).

The first 26 residues, 1 to 26 (MFKGILLCVLFAVLSANPLSQPEGFA), serve as a signal peptide directing secretion. Residues 27-73 (DEEERDVRGLASLLGKALKAALKIGANALGGSPQQREANDERRFADG) constitute a propeptide that is removed on maturation. Tyrosine 77 bears the Sulfotyrosine mark. At phenylalanine 83 the chain carries Phenylalanine amide. The propeptide occupies 87–137 (DDEDDVNERDVRGFGSFLGKALKAGLKIGTHFLGGAPQQREANDERRFADG). Tyrosine 141 carries the post-translational modification Sulfotyrosine. Position 147 is a phenylalanine amide (phenylalanine 147). The propeptide occupies 151–152 (DG). The residue at position 156 (tyrosine 156) is a Sulfotyrosine. The residue at position 162 (phenylalanine 162) is a Phenylalanine amide. A propeptide spanning residues 166–216 (DDEDDVHERDVRGFGSFLGKALKAALKIGANALGGSPQQREANDERRFADG) is cleaved from the precursor. Residues 198-234 (LGGSPQQREANDERRFADGQQDYTGWMDFGRRNGEDD) are disordered. Tyrosine 220 is modified (sulfotyrosine). Residue phenylalanine 226 is modified to Phenylalanine amide. A propeptide spanning residues 230-234 (NGEDD) is cleaved from the precursor.

It belongs to the gastrin/cholecystokinin family. In terms of tissue distribution, expressed by the skin glands.

The protein resides in the secreted. The pharmacological activities of caerulein are quite similar to the physiological activities of gastrin and related peptides. This chain is Preprocaerulein type-4, found in Xenopus borealis (Kenyan clawed frog).